Here is a 199-residue protein sequence, read N- to C-terminus: Ras-related protein Rab-7b (199 aa).

GTP contacts are provided by residues 15-22 (GALGVGKT), 34-40 (FEEYQTT), 63-67 (DTGGQ), 124-127 (NKID), and 154-155 (AK). 2 short sequence motifs (switch) span residues 28-41 (YVHKTFFEEYQTTL) and 67-82 (QERFRSMVSTFYKGSD). The residue at position 186 (Ser-186) is a Phosphoserine. 2 S-geranylgeranyl cysteine lipidation sites follow: Cys-198 and Cys-199.

The protein belongs to the small GTPase superfamily. Rab family.

It is found in the late endosome. The protein localises to the lysosome. The protein resides in the golgi apparatus. It localises to the trans-Golgi network. Its subcellular location is the cytoplasmic vesicle. It is found in the phagosome. The protein localises to the phagosome membrane. Its function is as follows. Controls vesicular trafficking from endosomes to the trans-Golgi network (TGN). Acts as a negative regulator of TLR9 signaling and can suppress TLR9-triggered TNFA, IL6, and IFNB production in macrophages by promoting TLR9 lysosomal degradation. Also negatively regulates TLR4 signaling in macrophages by promoting lysosomal degradation of TLR4. Promotes megakaryocytic differentiation by increasing NF-kappa-B-dependent IL6 production and subsequently enhancing the association of STAT3 with GATA1. Not involved in the regulation of the EGF- and EGFR degradation pathway. The protein is Ras-related protein Rab-7b (Rab7b) of Mus musculus (Mouse).